The primary structure comprises 179 residues: FADH(2)-dependent resorcinol hydroxylase, reductase component (179 aa).

It belongs to the non-flavoprotein flavin reductase family. As to quaternary structure, the FADH(2)-dependent resorcinol hydroxylase is composed of two subunits, GraA (the oxygenase component) and GraD (the reductase component). Both subunits are required for activity.

The catalysed reaction is FADH2 + NAD(+) = FAD + NADH + 2 H(+). The protein operates within aromatic compound metabolism. In terms of biological role, involved in the gamma-resorcylate (2,6-dihydroxybenzoate) catabolism. Reductase component of the resorcinol hydroxylase, which catalyzes the FADPH-dependent conversion of resorcinol to hydroxyquinol. Catalyzes the reduction of FAD by NADH. The reduced flavin is then transferred to the oxygenase component GraA. The protein is FADH(2)-dependent resorcinol hydroxylase, reductase component of Rhizobium sp. (strain MTP-10005).